We begin with the raw amino-acid sequence, 110 residues long: Class I hydrophobin Po.HYD (110 aa).

A signal peptide spans 1–27 (MFSKATLFFTTVSRYRDTQAPIPTGQT). 4 disulfide bridges follow: cysteine 35–cysteine 91, cysteine 42–cysteine 85, cysteine 43–cysteine 75, and cysteine 92–cysteine 105.

Belongs to the fungal hydrophobin family. Self-assembles to form functional amyloid fibrils called rodlets. Self-assembly into fibrillar rodlets occurs spontaneously at hydrophobic:hydrophilic interfaces and the rodlets further associate laterally to form amphipathic monolayers.

The protein resides in the secreted. It is found in the cell wall. Its function is as follows. Aerial growth, conidiation, and dispersal of filamentous fungi in the environment rely upon a capability of their secreting small amphipathic proteins called hydrophobins (HPBs) with low sequence identity. Class I can self-assemble into an outermost layer of rodlet bundles on aerial cell surfaces, conferring cellular hydrophobicity that supports fungal growth, development and dispersal; whereas Class II form highly ordered films at water-air interfaces through intermolecular interactions but contribute nothing to the rodlet structure. The chain is Class I hydrophobin Po.HYD from Pleurotus ostreatus (Oyster mushroom).